A 91-amino-acid polypeptide reads, in one-letter code: LYR motif-containing protein 4 (91 aa).

Residues arginine 6 and lysine 44 each coordinate pantetheine 4'-phosphate. At lysine 47 the chain carries N6-succinyllysine.

It belongs to the complex I LYR family. As to quaternary structure, homodimer. Component of the mitochondrial core iron-sulfur cluster (ISC) complex composed of NFS1, LYRM4, NDUFAB1, ISCU, FXN, and FDX2; this complex is a heterohexamer containing two copies of each monomer. Component of the cyteine desulfurase complex composed of NFS1, LYRM4 and NDUFAB1; this complex contributes to the stability and cysteine desulfurase activity of NFS1. Interacts with FXN; this interaction is nickel-dependent. Interacts with the cytoplasmic form of NFS1; the complex increases the stability of NFS1. Forms a complex with the cytoplasmic form of NFS1; this complex increases the stability and cysteine desulfurase activity of NFS1. Interacts with NFS1. Component of a complex composed of FXN, NFS1, LYRM4 and ISCU.

The protein localises to the mitochondrion. It is found in the nucleus. Its pathway is cofactor biosynthesis; iron-sulfur cluster biosynthesis. Its function is as follows. Stabilizing factor, of the core iron-sulfur cluster (ISC) assembly complex, that regulates, in association with NDUFAB1, the stability and the cysteine desulfurase activity of NFS1 and participates in the [2Fe-2S] clusters assembly on the scaffolding protein ISCU. The core iron-sulfur cluster (ISC) assembly complex is involved in the de novo synthesis of a [2Fe-2S] cluster, the first step of the mitochondrial iron-sulfur protein biogenesis. This process is initiated by the cysteine desulfurase complex (NFS1:LYRM4:NDUFAB1) that produces persulfide which is delivered on the scaffold protein ISCU in a FXN-dependent manner. Then this complex is stabilized by FDX2 which provides reducing equivalents to accomplish the [2Fe-2S] cluster assembly. Finally, the [2Fe-2S] cluster is transferred from ISCU to chaperone proteins, including HSCB, HSPA9 and GLRX5. May also participates in the iron-sulfur protein biogenesis in the cytoplasm through its interaction with the cytoplasmic form of NFS1. This chain is LYR motif-containing protein 4, found in Mus musculus (Mouse).